A 202-amino-acid chain; its full sequence is Putative 3-methyladenine DNA glycosylase (202 aa).

Belongs to the DNA glycosylase MPG family.

This Rhodopseudomonas palustris (strain BisB5) protein is Putative 3-methyladenine DNA glycosylase.